A 329-amino-acid polypeptide reads, in one-letter code: Flotillin-like protein FloA (329 aa).

2 helical membrane passes run 5 to 25 and 27 to 47; these read IFLL…LSFI and LGLW…TLVG.

This sequence belongs to the flotillin-like FloA family. As to quaternary structure, homooligomerizes.

Its subcellular location is the cell membrane. It localises to the membrane raft. Found in functional membrane microdomains (FMM) that may be equivalent to eukaryotic membrane rafts. FMMs are highly dynamic and increase in number as cells age. Flotillins are thought to be important factors in membrane fluidity. In Thermoanaerobacter sp. (strain X514), this protein is Flotillin-like protein FloA.